Reading from the N-terminus, the 436-residue chain is Lactonohydrolase oryL (436 aa).

The signal sequence occupies residues 1–27 (MLSYTSHCLQALLGVASLPYRQYQAYS).

It belongs to the SMP-30/CGR1 family.

The protein operates within secondary metabolite biosynthesis. Its function is as follows. Lactonohydrolase; part of the gene cluster that mediates the biosynthesis of oryzines, natural products with an unusual maleidride backbone. The two subunits of the fungal fatty acid synthase oryfasA and oryfasB probably form octenoic acid. This fatty acid is most likely activated by the acyl-CoA ligase oryP to give octenyl-CoA before the citrate synthase-like protein oryE catalyzes condensation with oxaloacetate to form tricarboxylic acid. The next steps of the pathways are conjectural, but a favorite possible route has been proposed, beginning with decarboxylation and concomitant dehydration by the decarboxylase oryM, followed by tautomerization, which may lead to the production of a diene intermediate. Reduction of this diene intermediate could give the known metabolite piliformic acid. On the pathway to oryzine B and oryzine A, however, hydroxylation of the diene by the alpha-ketoglutarate-dependent dioxygenase oryG and lactonisation by the lactonohydrolases oryH or oryL could give oryzine B directly. Finally, enoyl reduction by the dehydrogenase oryD would then convert oryzine B into oryzine A. This Aspergillus oryzae (strain ATCC 42149 / RIB 40) (Yellow koji mold) protein is Lactonohydrolase oryL.